Reading from the N-terminus, the 47-residue chain is Ruminococcin-A (47 aa).

An N-terminal signal peptide occupies residues 1–23; it reads MRNDVLTLTNPMEENELEQILGG. Residues T30 and T39 each carry the 2,3-didehydrobutyrine modification. The segment at residues 30–35 is a cross-link (beta-methyllanthionine (Thr-Cys)); the sequence is TISHEC. The lanthionine (Ser-Cys) cross-link spans 32-46; sequence SHECNMNTWQFLFTC. The beta-methyllanthionine (Thr-Cys) cross-link spans 45 to 47; sequence TCC.

Belongs to the type A lantibiotic family. In terms of processing, maturation of lantibiotics involves the enzymatic conversion of Thr, and Ser into dehydrated AA and the formation of thioether bonds with cysteine. This is followed by membrane translocation and cleavage of the modified precursor.

The protein localises to the secreted. Lanthionine-containing peptide antibiotic (lantibiotic) active on Gram-positive bacteria. The bactericidal activity of lantibiotics is based on depolarization of energized bacterial cytoplasmic membranes, initiated by the formation of aqueous transmembrane pores. Ruminococcin A is a broad spectrum bacteriocin exhibiting activity against a wide range of pathogenic clostridia and B.longum. The chain is Ruminococcin-A (rumA1) from Blautia hansenii (Ruminococcus hansenii).